The following is a 135-amino-acid chain: Probable transcription factor At2g20613 (135 aa).

The interval 1–104 (MSHKRFNPLT…KRGGGGGEEA (104 aa)) is disordered. Residues 28–41 (DSSSDEETDSDSDS) show a composition bias toward acidic residues. The segment covering 62–80 (KSVKISEKSVAKRSRETHE) has biased composition (basic and acidic residues).

The protein belongs to the GeBP family.

This is Probable transcription factor At2g20613 from Arabidopsis thaliana (Mouse-ear cress).